A 357-amino-acid polypeptide reads, in one-letter code: 4-hydroxy-3-methylbut-2-en-1-yl diphosphate synthase (flavodoxin) (357 aa).

Positions 264, 267, 299, and 306 each coordinate [4Fe-4S] cluster.

It belongs to the IspG family. Requires [4Fe-4S] cluster as cofactor.

The catalysed reaction is (2E)-4-hydroxy-3-methylbut-2-enyl diphosphate + oxidized [flavodoxin] + H2O + 2 H(+) = 2-C-methyl-D-erythritol 2,4-cyclic diphosphate + reduced [flavodoxin]. The protein operates within isoprenoid biosynthesis; isopentenyl diphosphate biosynthesis via DXP pathway; isopentenyl diphosphate from 1-deoxy-D-xylulose 5-phosphate: step 5/6. Its function is as follows. Converts 2C-methyl-D-erythritol 2,4-cyclodiphosphate (ME-2,4cPP) into 1-hydroxy-2-methyl-2-(E)-butenyl 4-diphosphate. The protein is 4-hydroxy-3-methylbut-2-en-1-yl diphosphate synthase (flavodoxin) of Campylobacter jejuni subsp. jejuni serotype O:6 (strain 81116 / NCTC 11828).